Consider the following 581-residue polypeptide: Solute carrier family 15 member 3 (581 aa).

Residues 1–14 (MPAPRAREQPRVPG) show a composition bias toward basic and acidic residues. A disordered region spans residues 1-26 (MPAPRAREQPRVPGERQPLLPRGARG). The helical transmembrane segment at 38-58 (VLLVEMLERAAFFGVTANLVL) threads the bilayer. Residues N61 and N66 are each glycosylated (N-linked (GlcNAc...) asparagine). The next 3 helical transmembrane spans lie at 76–96 (ALVF…LADV), 103–123 (AVAL…ATAF), and 155–175 (PYCA…ASSV). N-linked (GlcNAc...) asparagine glycosylation occurs at N178. The chain crosses the membrane as a helical span at residues 200-220 (NWFYWSINLGAVLSLLVVAFI). N223 is a glycosylation site (N-linked (GlcNAc...) asparagine). The next 2 membrane-spanning stretches (helical) occupy residues 232–252 (IPVG…PVFI) and 310–330 (FQVL…WMVY). N356 is a glycosylation site (N-linked (GlcNAc...) asparagine). The next 2 membrane-spanning stretches (helical) occupy residues 369–389 (TIPE…LVPL) and 411–431 (MALG…LEME). A glycan (N-linked (GlcNAc...) asparagine) is linked at N439. Helical transmembrane passes span 458–478 (IWWQ…ASIP), 497–517 (GIFF…VALL), and 540–560 (LYFF…VWIA).

This sequence belongs to the major facilitator superfamily. Proton-dependent oligopeptide transporter (POT/PTR) (TC 2.A.17) family.

The protein resides in the lysosome membrane. It is found in the endosome membrane. The enzyme catalyses glycylglycylglycine(out) + n H(+)(out) = glycylglycylglycine(in) + n H(+)(in). It carries out the reaction carnosine(out) + n H(+)(out) = carnosine(in) + n H(+)(in). The catalysed reaction is L-histidine(out) + n H(+)(out) = L-histidine(in) + n H(+)(in). It catalyses the reaction N-acetyl-D-muramoyl-L-alanyl-D-isoglutamine(out) + n H(+)(out) = N-acetyl-D-muramoyl-L-alanyl-D-isoglutamine(in) + n H(+)(in). Proton-coupled amino-acid transporter that transports free histidine and certain di- and tripeptides, and is involved in innate immune response. Also able to transport carnosine. Involved in the detection of microbial pathogens by toll-like receptors (TLRs) and NOD-like receptors (NLRs), probably by mediating transport of bacterial peptidoglycans across the endolysosomal membrane: catalyzes the transport of certain bacterial peptidoglycans, such as muramyl dipeptide (MDP), the NOD2 ligand. The polypeptide is Solute carrier family 15 member 3 (Homo sapiens (Human)).